We begin with the raw amino-acid sequence, 414 residues long: Probable 1-acylglycerol-3-phosphate O-acyltransferase (414 aa).

The AB hydrolase-1 domain occupies 117–382; that stretch reads PTLVMVHGYG…GGHFVFIDNP (266 aa). The short motif at 193–197 is the GXSXG element; that stretch reads GHSFG. The short motif at 375-380 is the HXXXXD motif element; sequence HFVFID.

The protein belongs to the peptidase S33 family. ABHD4/ABHD5 subfamily.

It localises to the cytoplasm. The catalysed reaction is a 1-acyl-sn-glycero-3-phosphate + an acyl-CoA = a 1,2-diacyl-sn-glycero-3-phosphate + CoA. Functionally, lysophosphatidic acid acyltransferase which functions in phosphatidic acid biosynthesis. May regulate neutral lipid accumulation and participate in the regulation of lipid turnover in vegetative cells. May possess additional triacylglycerol lipase and phospholipase A2 activities in vitro. The polypeptide is Probable 1-acylglycerol-3-phosphate O-acyltransferase (Oryza sativa subsp. japonica (Rice)).